The primary structure comprises 203 residues: Translation initiation factor IF-3 (203 aa).

Over residues Glu-172–Glu-182 the composition is skewed to basic and acidic residues. A disordered region spans residues Glu-172–Asp-203.

Belongs to the IF-3 family. Monomer.

Its subcellular location is the cytoplasm. Functionally, IF-3 binds to the 30S ribosomal subunit and shifts the equilibrium between 70S ribosomes and their 50S and 30S subunits in favor of the free subunits, thus enhancing the availability of 30S subunits on which protein synthesis initiation begins. The chain is Translation initiation factor IF-3 from Helicobacter pylori (strain ATCC 700392 / 26695) (Campylobacter pylori).